The primary structure comprises 145 residues: FAD synthase (145 aa).

ATP is bound by residues 5 to 6, 10 to 13, aspartate 92, and tyrosine 119; these read TF and HPGH.

The protein belongs to the archaeal FAD synthase family. As to quaternary structure, homodimer. It depends on a divalent metal cation as a cofactor.

It catalyses the reaction FMN + ATP + H(+) = FAD + diphosphate. Its pathway is cofactor biosynthesis; FAD biosynthesis; FAD from FMN: step 1/1. In terms of biological role, catalyzes the transfer of the AMP portion of ATP to flavin mononucleotide (FMN) to produce flavin adenine dinucleotide (FAD) coenzyme. The polypeptide is FAD synthase (Methanothermus fervidus (strain ATCC 43054 / DSM 2088 / JCM 10308 / V24 S)).